We begin with the raw amino-acid sequence, 165 residues long: uncharacterized protein (165 aa).

Residues 51 to 102 (KQAAVEPGARGGERPTGSQAGVTDTPDSAPFQRRSRAPRAREQAAQAGLNQK) are disordered. The segment covering 66 to 76 (TGSQAGVTDTP) has biased composition (polar residues).

This is an uncharacterized protein from Mus musculus (Mouse).